The primary structure comprises 55 residues: Large ribosomal subunit protein bL33 (55 aa).

The protein belongs to the bacterial ribosomal protein bL33 family.

The protein is Large ribosomal subunit protein bL33 of Rhizobium etli (strain CIAT 652).